The primary structure comprises 1000 residues: C2 domain-containing protein 5 (1000 aa).

The region spanning 1 to 109 is the C2 domain; sequence MPGKLKVKIV…EAATVISGWF (109 aa). Asp-19, Asp-26, Asp-76, Asp-78, Ser-81, and Asp-84 together coordinate Ca(2+). At Ser-197 the chain carries Phosphoserine; by PKB/AKT2. Residues Ser-200 and Ser-260 each carry the phosphoserine modification. The disordered stretch occupies residues 265-330; the sequence is MKEIPFNEDP…SGSAGKEGGP (66 aa). A compositionally biased stretch (polar residues) spans 274–289; that stretch reads PNPNTHSSGPSTPLKN. Low complexity predominate over residues 290 to 318; that stretch reads QTYSFSPSKSYSRQSSSSDTDLSLTPKTG. Phosphoserine is present on residues Ser-293, Ser-295, Ser-304, Ser-305, and Ser-306. Thr-317 is subject to Phosphothreonine. Gly residues predominate over residues 319–328; sequence MGSGSAGKEG. A Phosphoserine modification is found at Ser-323. Thr-601 carries the phosphothreonine modification. The interval 639-669 is disordered; sequence EIIGSPIPEPRQRSRLLRSQSESSDEVTELD. Residues Ser-643, Ser-657, Ser-659, Ser-661, and Ser-662 each carry the phosphoserine modification. At Thr-666 the chain carries Phosphothreonine. Position 671 is a phosphoserine (Ser-671). A Phosphothreonine modification is found at Thr-807. 2 positions are modified to phosphoserine: Ser-817 and Ser-852.

The cofactor is Ca(2+). In terms of processing, phosphorylated on Ser-197 by active myristoylated kinase AKT2; insulin-stimulated phosphorylation by AKT2 regulates SLC2A4/GLUT4 translocation into the plasma membrane.

It localises to the cytoplasmic vesicle membrane. The protein localises to the cytoplasm. The protein resides in the cell cortex. It is found in the cell membrane. Its subcellular location is the cell projection. It localises to the ruffle. Functionally, required for insulin-stimulated glucose transport and glucose transporter SLC2A4/GLUT4 translocation from intracellular glucose storage vesicle (GSV) to the plasma membrane (PM) in adipocytes. Binds phospholipid membranes in a calcium-dependent manner and is necessary for the optimal membrane fusion between SLC2A4/GLUT4 GSV and the PM. The sequence is that of C2 domain-containing protein 5 (C2CD5) from Pongo abelii (Sumatran orangutan).